A 190-amino-acid polypeptide reads, in one-letter code: Potassium-transporting ATPase KdpC subunit (190 aa).

Residues 10-30 (LLVFLTILTGGVYPLATTVLG) traverse the membrane as a helical segment.

It belongs to the KdpC family. The system is composed of three essential subunits: KdpA, KdpB and KdpC.

It is found in the cell inner membrane. Part of the high-affinity ATP-driven potassium transport (or Kdp) system, which catalyzes the hydrolysis of ATP coupled with the electrogenic transport of potassium into the cytoplasm. This subunit acts as a catalytic chaperone that increases the ATP-binding affinity of the ATP-hydrolyzing subunit KdpB by the formation of a transient KdpB/KdpC/ATP ternary complex. In Cronobacter sakazakii (strain ATCC BAA-894) (Enterobacter sakazakii), this protein is Potassium-transporting ATPase KdpC subunit.